We begin with the raw amino-acid sequence, 149 residues long: Probable flagellum biosynthesis repressor protein FlbT (149 aa).

The protein belongs to the FlbT family.

Has a post-transcriptional repressor function in flagellum biogenesis. Associates with the 5'-UTR of fljK mRNA and promotes its degradation. This chain is Probable flagellum biosynthesis repressor protein FlbT, found in Rhizobium leguminosarum bv. trifolii (strain WSM2304).